The chain runs to 319 residues: Ribosomal RNA small subunit methyltransferase H (319 aa).

S-adenosyl-L-methionine is bound by residues 39–41 (GGH), Asp-59, Phe-83, Asp-104, and Gln-111.

Belongs to the methyltransferase superfamily. RsmH family.

The protein localises to the cytoplasm. The enzyme catalyses cytidine(1402) in 16S rRNA + S-adenosyl-L-methionine = N(4)-methylcytidine(1402) in 16S rRNA + S-adenosyl-L-homocysteine + H(+). In terms of biological role, specifically methylates the N4 position of cytidine in position 1402 (C1402) of 16S rRNA. In Ralstonia pickettii (strain 12D), this protein is Ribosomal RNA small subunit methyltransferase H.